A 517-amino-acid chain; its full sequence is Ribonuclease Y (517 aa).

A helical membrane pass occupies residues 1-21; it reads MIESLIALIAAIVGLGIGYLV. In terms of domain architecture, KH spans 207 to 273; that stretch reads LINVINIKND…TKVIELLVED (67 aa). Positions 333–426 constitute an HD domain; sequence ALAHSLEVAH…VCAADTLSAA (94 aa).

Belongs to the RNase Y family.

The protein localises to the cell membrane. Its function is as follows. Endoribonuclease that initiates mRNA decay. The chain is Ribonuclease Y from Campylobacter jejuni subsp. jejuni serotype O:2 (strain ATCC 700819 / NCTC 11168).